An 825-amino-acid polypeptide reads, in one-letter code: KH domain-containing protein YLL032C (825 aa).

One can recognise a KH domain in the interval 482–556 (PAEESFFIPE…ANICLAKNDL (75 aa)). Over residues 727–740 (SSKSNTSNSNTNGN) the composition is skewed to low complexity. Residues 727–766 (SSKSNTSNSNTNGNFRSMNNAKSRTTIDNTSQSGASPQRH) form a disordered region. The span at 741 to 762 (FRSMNNAKSRTTIDNTSQSGAS) shows a compositional bias: polar residues. A Phosphoserine modification is found at Ser762.

Its subcellular location is the cytoplasm. This is KH domain-containing protein YLL032C from Saccharomyces cerevisiae (strain ATCC 204508 / S288c) (Baker's yeast).